Here is a 119-residue protein sequence, read N- to C-terminus: Cysteine-rich DPF motif domain-containing protein 1 (119 aa).

Belongs to the CDPF1 family.

The sequence is that of Cysteine-rich DPF motif domain-containing protein 1 (Cdpf1) from Mus musculus (Mouse).